A 232-amino-acid polypeptide reads, in one-letter code: Small ribosomal subunit protein uS2 (232 aa).

The protein belongs to the universal ribosomal protein uS2 family.

This is Small ribosomal subunit protein uS2 from Alkaliphilus oremlandii (strain OhILAs) (Clostridium oremlandii (strain OhILAs)).